The chain runs to 288 residues: Diaminopimelate epimerase (288 aa).

Substrate-binding residues include Asn14 and Asn67. Cys76 acts as the Proton donor in catalysis. Substrate is bound by residues 77-78, Asn166, Asn199, and 217-218; these read GN and ER. Cys226 (proton acceptor) is an active-site residue. 227–228 contributes to the substrate binding site; that stretch reads GT.

It belongs to the diaminopimelate epimerase family. Homodimer.

Its subcellular location is the cytoplasm. It catalyses the reaction (2S,6S)-2,6-diaminopimelate = meso-2,6-diaminopimelate. Its pathway is amino-acid biosynthesis; L-lysine biosynthesis via DAP pathway; DL-2,6-diaminopimelate from LL-2,6-diaminopimelate: step 1/1. Functionally, catalyzes the stereoinversion of LL-2,6-diaminopimelate (L,L-DAP) to meso-diaminopimelate (meso-DAP), a precursor of L-lysine and an essential component of the bacterial peptidoglycan. This Bacillus cereus (strain ATCC 10987 / NRS 248) protein is Diaminopimelate epimerase.